The chain runs to 526 residues: Dolichyl pyrophosphate Glc1Man9GlcNAc2 alpha-1,3-glucosyltransferase (526 aa).

A run of 11 helical transmembrane segments spans residues 9–29 (AGGH…CLLI), 108–128 (FSVI…CKCI), 143–163 (FILS…HIHF), 188–208 (GALL…VAPA), 238–258 (VTSL…PFLA), 334–354 (PLAT…CLWF), 361–380 (GFLR…GWHV), 400–422 (AGDA…PLLF), 427–449 (LPIK…KTLF), 461–481 (TVYL…LPFT), and 487–507 (YPFI…TYAW).

It belongs to the ALG6/ALG8 glucosyltransferase family.

Its subcellular location is the endoplasmic reticulum membrane. The enzyme catalyses an alpha-D-Glc-(1-&gt;3)-alpha-D-Man-(1-&gt;2)-alpha-D-Man-(1-&gt;2)-alpha-D-Man-(1-&gt;3)-[alpha-D-Man-(1-&gt;2)-alpha-D-Man-(1-&gt;3)-[alpha-D-Man-(1-&gt;2)-alpha-D-Man-(1-&gt;6)]-alpha-D-Man-(1-&gt;6)]-beta-D-Man-(1-&gt;4)-beta-D-GlcNAc-(1-&gt;4)-alpha-D-GlcNAc-diphospho-di-trans,poly-cis-dolichol + a di-trans,poly-cis-dolichyl beta-D-glucosyl phosphate = an alpha-D-Glc-(1-&gt;3)-alpha-D-Glc-(1-&gt;3)-alpha-D-Man-(1-&gt;2)-alpha-D-Man-(1-&gt;2)-alpha-D-Man-(1-&gt;3)-[alpha-D-Man-(1-&gt;2)-alpha-D-Man-(1-&gt;3)-[alpha-D-Man-(1-&gt;2)-alpha-D-Man-(1-&gt;6)]-alpha-D-Man-(1-&gt;6)]-beta-D-Man-(1-&gt;4)-beta-D-GlcNAc-(1-&gt;4)-alpha-D-GlcNAc-diphospho-di-trans,poly-cis-dolichol + a di-trans,poly-cis-dolichyl phosphate + H(+). It functions in the pathway protein modification; protein glycosylation. Functionally, dolichyl pyrophosphate Glc1Man9GlcNAc2 alpha-1,3-glucosyltransferase that operates in the biosynthetic pathway of dolichol-linked oligosaccharides, the glycan precursors employed in protein asparagine (N)-glycosylation. The assembly of dolichol-linked oligosaccharides begins on the cytosolic side of the endoplasmic reticulum membrane and finishes in its lumen. The sequential addition of sugars to dolichol pyrophosphate produces dolichol-linked oligosaccharides containing fourteen sugars, including two GlcNAcs, nine mannoses and three glucoses. Once assembled, the oligosaccharide is transferred from the lipid to nascent proteins by oligosaccharyltransferases. In the lumen of the endoplasmic reticulum, adds the second glucose residue from dolichyl phosphate glucose (Dol-P-Glc) onto the lipid-linked oligosaccharide intermediate Glc(1)Man(9)GlcNAc(2)-PP-Dol to produce Glc(2)Man(9)GlcNAc(2)-PP-Dol. Glc(2)Man(9)GlcNAc(2)-PP-Dol is a substrate for ALG10, the following enzyme in the biosynthetic pathway. Required for PKD1/Polycystin-1 maturation and localization to the plasma membrane of the primary cilia. In Mus musculus (Mouse), this protein is Dolichyl pyrophosphate Glc1Man9GlcNAc2 alpha-1,3-glucosyltransferase.